The following is a 277-amino-acid chain: Protein CUSTOS (277 aa).

3 disordered regions span residues 1 to 81 (MVAP…QTTP), 108 to 182 (TQQA…QRCR), and 238 to 277 (SVNGDPVLSGTKKKKKKKAKKAREASLCPPAECAAAEPKN). Residues 9–18 (SDSESSSSDS) are compositionally biased toward low complexity. At serine 62 the chain carries Phosphoserine. A compositionally biased stretch (basic and acidic residues) spans 63–72 (RRREVNQHDE). At threonine 80 the chain carries Phosphothreonine. Residues 106 to 141 (KKTQQARLQQEAKEQQEAKEQQAAKEEQAAKKEEDG) adopt a coiled-coil conformation. Basic and acidic residues predominate over residues 115-142 (QEAKEQQEAKEQQAAKEEQAAKKEEDGF). 2 positions are modified to phosphoserine: serine 158 and serine 238. Residues 248 to 258 (TKKKKKKKAKK) are compositionally biased toward basic residues. A Nucleolar localization signal (NLS) motif is present at residues 249–256 (KKKKKKKA). Residues 265 to 277 (CPPAECAAAEPKN) show a composition bias toward low complexity.

Belongs to the CUSTOS family.

The protein resides in the nucleus envelope. In terms of biological role, plays a role in the regulation of Wnt signaling pathway during early development. This Rattus norvegicus (Rat) protein is Protein CUSTOS.